A 91-amino-acid chain; its full sequence is Class I hydrophobin 3 (91 aa).

The first 17 residues, 1-17, serve as a signal peptide directing secretion; it reads MLFRLFTIPSIALGVLG. 4 disulfide bridges follow: cysteine 31/cysteine 70, cysteine 35/cysteine 61, cysteine 36/cysteine 53, and cysteine 71/cysteine 87.

The protein belongs to the fungal hydrophobin family. Self-assembles to form functional amyloid fibrils called rodlets. Self-assembly into fibrillar rodlets occurs spontaneously at hydrophobic:hydrophilic interfaces and the rodlets further associate laterally to form amphipathic monolayers. In terms of tissue distribution, expressed in conidia.

The protein resides in the secreted. It is found in the cell wall. Aerial growth, conidiation, and dispersal of filamentous fungi in the environment rely upon a capability of their secreting small amphipathic proteins called hydrophobins (HPBs) with low sequence identity. Class I can self-assemble into an outermost layer of rodlet bundles on aerial cell surfaces, conferring cellular hydrophobicity that supports fungal growth, development and dispersal; whereas Class II form highly ordered films at water-air interfaces through intermolecular interactions but contribute nothing to the rodlet structure. HYD3 is a class I hydrophobin located on the conidial surface that activates specifically the humoral and cellular immunity of Metarhizium acridum's own host insect, Locusta migratoria manilensis (Meyen) but not that of other non-host insects. Improves the resistance of locusts to both specialist and generalist fungal pathogens (wide host range) when topically applied to the cuticle, but has no effect on the fungal resistance of other insects, including Spodoptera frugiperda and Galleria mellonella. This Metarhizium acridum (strain CQMa 102) protein is Class I hydrophobin 3.